Here is a 296-residue protein sequence, read N- to C-terminus: Thymidylate synthase (296 aa).

Residues R23 and 157–158 (RR) contribute to the dUMP site. The Nucleophile role is filled by C177. DUMP is bound by residues 198 to 201 (RSAD), N209, and 239 to 241 (HIY). Residue D201 participates in (6R)-5,10-methylene-5,6,7,8-tetrahydrofolate binding. A295 provides a ligand contact to (6R)-5,10-methylene-5,6,7,8-tetrahydrofolate.

This sequence belongs to the thymidylate synthase family. Bacterial-type ThyA subfamily. In terms of assembly, homodimer.

It localises to the cytoplasm. The catalysed reaction is dUMP + (6R)-5,10-methylene-5,6,7,8-tetrahydrofolate = 7,8-dihydrofolate + dTMP. It participates in pyrimidine metabolism; dTTP biosynthesis. Functionally, catalyzes the reductive methylation of 2'-deoxyuridine-5'-monophosphate (dUMP) to 2'-deoxythymidine-5'-monophosphate (dTMP) while utilizing 5,10-methylenetetrahydrofolate (mTHF) as the methyl donor and reductant in the reaction, yielding dihydrofolate (DHF) as a by-product. This enzymatic reaction provides an intracellular de novo source of dTMP, an essential precursor for DNA biosynthesis. The protein is Thymidylate synthase of Zymomonas mobilis subsp. mobilis (strain ATCC 31821 / ZM4 / CP4).